A 173-amino-acid polypeptide reads, in one-letter code: NAD(P)H-quinone oxidoreductase subunit I, chloroplastic (173 aa).

2 consecutive 4Fe-4S ferredoxin-type domains span residues 55–84 (GRIH…VDWD) and 95–124 (RSYS…MTEE). Cys-64, Cys-67, Cys-70, Cys-74, Cys-104, Cys-107, Cys-110, and Cys-114 together coordinate [4Fe-4S] cluster.

It belongs to the complex I 23 kDa subunit family. NDH is composed of at least 16 different subunits, 5 of which are encoded in the nucleus. Requires [4Fe-4S] cluster as cofactor.

The protein resides in the plastid. It localises to the chloroplast thylakoid membrane. It catalyses the reaction a plastoquinone + NADH + (n+1) H(+)(in) = a plastoquinol + NAD(+) + n H(+)(out). The enzyme catalyses a plastoquinone + NADPH + (n+1) H(+)(in) = a plastoquinol + NADP(+) + n H(+)(out). Functionally, NDH shuttles electrons from NAD(P)H:plastoquinone, via FMN and iron-sulfur (Fe-S) centers, to quinones in the photosynthetic chain and possibly in a chloroplast respiratory chain. The immediate electron acceptor for the enzyme in this species is believed to be plastoquinone. Couples the redox reaction to proton translocation, and thus conserves the redox energy in a proton gradient. The sequence is that of NAD(P)H-quinone oxidoreductase subunit I, chloroplastic from Nephroselmis olivacea (Green alga).